Reading from the N-terminus, the 79-residue chain is RNA-binding protein Hfq (79 aa).

In terms of domain architecture, Sm spans 10–69 (DPFLNALRKEHVPVSIYLVNGIKLQGNIESFDQYVVLLRNTVTQMVYKHAISTVVPARAV).

It belongs to the Hfq family. Homohexamer.

Its function is as follows. RNA chaperone that binds small regulatory RNA (sRNAs) and mRNAs to facilitate mRNA translational regulation in response to envelope stress, environmental stress and changes in metabolite concentrations. Also binds with high specificity to tRNAs. The chain is RNA-binding protein Hfq from Ralstonia nicotianae (strain ATCC BAA-1114 / GMI1000) (Ralstonia solanacearum).